The chain runs to 458 residues: Photosystem II CP43 reaction center protein (458 aa).

The next 5 helical transmembrane spans lie at 54–78 (LFEV…PHLA), 119–140 (LRGP…KDKN), 163–185 (KAMF…RVIT), 240–260 (RPFN…LSYS), and 276–297 (WFNN…ASQA). E352 contacts [CaMn4O5] cluster. The chain crosses the membrane as a helical span at residues 432–456 (RARAAAAGFEKGIDRKTEPVLSMSD).

It belongs to the PsbB/PsbC family. PsbC subfamily. PSII is composed of 1 copy each of membrane proteins PsbA, PsbB, PsbC, PsbD, PsbE, PsbF, PsbH, PsbI, PsbJ, PsbK, PsbL, PsbM, PsbT, PsbX, PsbY, PsbZ, Psb30/Ycf12, peripheral proteins PsbO, CyanoQ (PsbQ), PsbU, PsbV and a large number of cofactors. It forms dimeric complexes. Requires Binds multiple chlorophylls and provides some of the ligands for the Ca-4Mn-5O cluster of the oxygen-evolving complex. It may also provide a ligand for a Cl- that is required for oxygen evolution. PSII binds additional chlorophylls, carotenoids and specific lipids. as cofactor.

The protein resides in the cellular thylakoid membrane. Its function is as follows. One of the components of the core complex of photosystem II (PSII). It binds chlorophyll and helps catalyze the primary light-induced photochemical processes of PSII. PSII is a light-driven water:plastoquinone oxidoreductase, using light energy to abstract electrons from H(2)O, generating O(2) and a proton gradient subsequently used for ATP formation. This is Photosystem II CP43 reaction center protein from Prochlorothrix hollandica.